A 172-amino-acid chain; its full sequence is uncharacterized protein (172 aa).

Transmembrane regions (helical) follow at residues 7 to 27 (ILIS…CYGI), 59 to 79 (LMIF…LYLF), and 89 to 109 (FSLT…LFVK).

It to M.jannaschii MJ0695.

The protein resides in the cell membrane. This is an uncharacterized protein from Methanocaldococcus jannaschii (strain ATCC 43067 / DSM 2661 / JAL-1 / JCM 10045 / NBRC 100440) (Methanococcus jannaschii).